Consider the following 152-residue polypeptide: YDVESTDEDGWKKILVFLTFQHINFKEFISILCMWLKGRPKKSCITIAGVPDSGKSMFAYSLIKFLNGSVLSFANSKSHFWLQPLTECKAALIDDVTLPCWDYVDTFLRNALDGNAICIDCKHRAPVQTKCPPLLLTSNYDPRLHGVDSGGG.

In terms of domain architecture, SF3 helicase spans 23-152; the sequence is INFKEFISIL…RLHGVDSGGG (130 aa). 49-56 lines the ATP pocket; the sequence is GVPDSGKS.

Belongs to the papillomaviridae E1 protein family.

The protein resides in the host nucleus. It carries out the reaction Couples ATP hydrolysis with the unwinding of duplex DNA by translocating in the 3'-5' direction.. The catalysed reaction is ATP + H2O = ADP + phosphate + H(+). Its function is as follows. ATP-dependent DNA 3'-5' helicase required for initiation of viral DNA replication. It forms a complex with the viral E2 protein. The E1-E2 complex binds to the replication origin which contains binding sites for both proteins. During the initial step, a dimer of E1 interacts with a dimer of protein E2 leading to a complex that binds the viral origin of replication with high specificity. Then, a second dimer of E1 displaces the E2 dimer in an ATP-dependent manner to form the E1 tetramer. Following this, two E1 monomers are added to each half of the site, which results in the formation of two E1 trimers on the viral ori. Subsequently, two hexamers will be created. The double hexamer acts as a bi-directional helicase machinery and unwinds the viral DNA and then recruits the host DNA polymerase to start replication. In Avian papillomavirus fpv-l, this protein is Replication protein E1 (E1).